The chain runs to 438 residues: Xylose isomerase (438 aa).

Catalysis depends on residues His-100 and Asp-103. Glu-231, Glu-267, His-270, Asp-295, Asp-306, Asp-308, and Asp-338 together coordinate Mg(2+).

The protein belongs to the xylose isomerase family. In terms of assembly, homotetramer. Mg(2+) serves as cofactor.

The protein localises to the cytoplasm. The catalysed reaction is alpha-D-xylose = alpha-D-xylulofuranose. This chain is Xylose isomerase, found in Pseudomonas syringae pv. tomato (strain ATCC BAA-871 / DC3000).